A 175-amino-acid chain; its full sequence is Endothelial cell-specific chemotaxis regulator (175 aa).

An N-terminal signal peptide occupies residues 1-24; that stretch reads MGTVRAARLCGAILGFLLLQGAFG. Topologically, residues 25-91 are extracellular; the sequence is KPSLITEPLS…PSPTSETVLT (67 aa). The tract at residues 33-66 is disordered; the sequence is LSSNTGNSSSSEPRSSSSPASAGTPDTSQNITPI. Over residues 34–60 the composition is skewed to low complexity; the sequence is SSNTGNSSSSEPRSSSSPASAGTPDTS. A helical transmembrane segment spans residues 92–112; it reads VAAFGVISFIVILVVVVIILV. The Cytoplasmic portion of the chain corresponds to 113 to 175; it reads SVVSLRFKCR…KGCPTAEKVI (63 aa). Positions 124–145 are disordered; the sequence is NKESEDPQKPGSSGLSESCSTA. Residues 133-145 are compositionally biased toward polar residues; it reads PGSSGLSESCSTA. The residue at position 165 (serine 165) is a Phosphoserine.

This sequence belongs to the ECSCR family. As to quaternary structure, interacts with FLNA. Interacts with the 20S proteasome subunit PSMA7. In terms of processing, may be heavily O-glycosylated.

The protein resides in the cell membrane. Its subcellular location is the cytoplasm. In terms of biological role, regulates endothelial chemotaxis and tube formation. Has a role in angiogenesis and apoptosis via modulation of the actin cytoskeleton and facilitation of proteasomal degradation of the apoptosis inhibitors BIRC3/IAP1 and BIRC2/IAP2. The polypeptide is Endothelial cell-specific chemotaxis regulator (ECSCR) (Canis lupus familiaris (Dog)).